The chain runs to 283 residues: N-terminal Xaa-Pro-Lys N-methyltransferase 2 (283 aa).

Residues G124, R129, D146, 174–175 (LQ), Q190, and H195 each bind S-adenosyl-L-methionine.

It belongs to the methyltransferase superfamily. NTM1 family.

Its subcellular location is the nucleus. It catalyses the reaction N-terminal L-alanyl-L-prolyl-L-lysyl-[protein] + S-adenosyl-L-methionine = N-terminal N-methyl-L-alanyl-L-prolyl-L-lysyl-[protein] + S-adenosyl-L-homocysteine + H(+). It carries out the reaction N-terminal L-prolyl-L-prolyl-L-lysyl-[protein] + S-adenosyl-L-methionine = N-terminal N-methyl-L-prolyl-L-prolyl-L-lysyl-[protein] + S-adenosyl-L-homocysteine + H(+). The catalysed reaction is N-terminal L-seryl-L-prolyl-L-lysyl-[protein] + S-adenosyl-L-methionine = N-terminal N-methyl-L-seryl-L-prolyl-L-lysyl-[protein] + S-adenosyl-L-homocysteine + H(+). In terms of biological role, alpha N-methyltransferase that methylates the N-terminus of target proteins containing the N-terminal motif [Ala/Pro/Ser]-Pro-Lys when the initiator Met is cleaved. Specifically catalyzes monomethylation of exposed alpha-amino group of Ala or Ser residue in the [Ala/Ser]-Pro-Lys motif and Pro in the Pro-Pro-Lys motif. Predominantly functions as a mono-methyltransferase but is also able to di-/tri-methylate the GPKRIA peptide and di-methylate the PPKRIA peptide (in vitro). May activate NTMT1 by priming its substrates for trimethylation. The sequence is that of N-terminal Xaa-Pro-Lys N-methyltransferase 2 from Homo sapiens (Human).